We begin with the raw amino-acid sequence, 432 residues long: EF-hand calcium-binding domain-containing protein 3 (432 aa).

EF-hand domains are found at residues 45–80 (AQLE…LGMN) and 81–116 (LNTY…KKLF). Ca(2+)-binding residues include D94, D96, D98, K100, and D105. Y273 is modified (phosphotyrosine). Residues 394–432 (SMNKSSPSNSGLSSPSDFSESDPETGRKRKRKSSRGFRQ) form a disordered region. Over residues 395–411 (MNKSSPSNSGLSSPSDF) the composition is skewed to low complexity. Over residues 420 to 432 (RKRKRKSSRGFRQ) the composition is skewed to basic residues.

This Mus musculus (Mouse) protein is EF-hand calcium-binding domain-containing protein 3 (Efcab3).